The chain runs to 298 residues: GTPase Era (298 aa).

The Era-type G domain maps to 4 to 171 (RAGFVALIGR…KEKIVSFLPE (168 aa)). The segment at 12–19 (GRTNVGKS) is G1. 12 to 19 (GRTNVGKS) serves as a coordination point for GTP. Positions 38 to 42 (QTTRN) are G2. The tract at residues 59–62 (DTPG) is G3. Residues 59–63 (DTPGI) and 121–124 (NKID) each bind GTP. The interval 121–124 (NKID) is G4. The segment at 150–152 (ISA) is G5. The KH type-2 domain occupies 202-280 (LEEEVPHGVY…FLQLWVKVRK (79 aa)).

The protein belongs to the TRAFAC class TrmE-Era-EngA-EngB-Septin-like GTPase superfamily. Era GTPase family. Monomer.

It localises to the cytoplasm. The protein localises to the cell membrane. Its function is as follows. An essential GTPase that binds both GDP and GTP, with rapid nucleotide exchange. Plays a role in 16S rRNA processing and 30S ribosomal subunit biogenesis and possibly also in cell cycle regulation and energy metabolism. The sequence is that of GTPase Era from Caldanaerobacter subterraneus subsp. tengcongensis (strain DSM 15242 / JCM 11007 / NBRC 100824 / MB4) (Thermoanaerobacter tengcongensis).